Reading from the N-terminus, the 86-residue chain is Co-chaperonin GroES (86 aa).

The protein belongs to the GroES chaperonin family. As to quaternary structure, heptamer of 7 subunits arranged in a ring. Interacts with the chaperonin GroEL.

The protein resides in the cytoplasm. Its function is as follows. Together with the chaperonin GroEL, plays an essential role in assisting protein folding. The GroEL-GroES system forms a nano-cage that allows encapsulation of the non-native substrate proteins and provides a physical environment optimized to promote and accelerate protein folding. GroES binds to the apical surface of the GroEL ring, thereby capping the opening of the GroEL channel. This is Co-chaperonin GroES from Campylobacter curvus (strain 525.92).